A 169-amino-acid chain; its full sequence is MLNRLESLTQRVGGSNELIDQWLHARKELLVSYCTVIGIKPQKEKHTPLNAKTLENFCHNLVDYLSSGHFHLYDRIIKEVEGASSPKMALTAKIHPALKNNTQTIMAFHDCYTNIEIDDDSCTEYQQALSDIGEALDARFRLEDQLIQWAAESWQAAQLADADKKSQVN.

It belongs to the Rsd/AlgQ family. As to quaternary structure, interacts with RpoD.

Its subcellular location is the cytoplasm. Binds RpoD and negatively regulates RpoD-mediated transcription activation by preventing the interaction between the primary sigma factor RpoD with the catalytic core of the RNA polymerase and with promoter DNA. May be involved in replacement of the RNA polymerase sigma subunit from RpoD to RpoS during the transition from exponential growth to the stationary phase. The polypeptide is Regulator of sigma D (Yersinia pestis).